We begin with the raw amino-acid sequence, 600 residues long: NAD-dependent malic enzyme, mitochondrial (600 aa).

The N-terminal 68 residues, 1-68, are a transit peptide targeting the mitochondrion; that stretch reads MTRTPFTLSL…NMPIAAPVRT (68 aa). Residue R93 participates in fumarate binding. Catalysis depends on Y138, which acts as the Proton donor. (S)-malate is bound at residue R194. R194 is an NAD(+) binding site. K212 (proton acceptor) is an active-site residue. A divalent metal cation is bound by residues E283, D284, and D307. Residues G344 and A347 each coordinate NAD(+). Positions 458 and 502 each coordinate (S)-malate.

It belongs to the malic enzymes family. It depends on Mg(2+) as a cofactor. The cofactor is Mn(2+).

It is found in the mitochondrion matrix. The protein resides in the cytoplasm. The protein localises to the cytosol. It localises to the nucleus. The catalysed reaction is (S)-malate + NAD(+) = pyruvate + CO2 + NADH. It carries out the reaction oxaloacetate + H(+) = pyruvate + CO2. In terms of biological role, NAD-dependent mitochondrial malic enzyme that catalyzes the oxidative decarboxylation of malate to pyruvate. The sequence is that of NAD-dependent malic enzyme, mitochondrial from Cryptococcus neoformans var. grubii serotype A (strain H99 / ATCC 208821 / CBS 10515 / FGSC 9487) (Filobasidiella neoformans var. grubii).